Reading from the N-terminus, the 294-residue chain is Cytidine deaminase (294 aa).

CMP/dCMP-type deaminase domains lie at 48–168 (DEDA…FGPK) and 186–294 (LTGD…VLLA). A substrate-binding site is contributed by 89–91 (NME). Residue histidine 102 coordinates Zn(2+). Catalysis depends on glutamate 104, which acts as the Proton donor. Positions 129 and 132 each coordinate Zn(2+).

It belongs to the cytidine and deoxycytidylate deaminase family. As to quaternary structure, homodimer. It depends on Zn(2+) as a cofactor.

The catalysed reaction is cytidine + H2O + H(+) = uridine + NH4(+). It carries out the reaction 2'-deoxycytidine + H2O + H(+) = 2'-deoxyuridine + NH4(+). Its function is as follows. This enzyme scavenges exogenous and endogenous cytidine and 2'-deoxycytidine for UMP synthesis. The polypeptide is Cytidine deaminase (Escherichia coli O157:H7).